The sequence spans 239 residues: MNIVVATHNEGKLVEIRDILAEEFGDGAHDIELVSAGSLGLPDPVETGITFEANALLKARFVARLTGLPAIADDSGLIVDVMGNAPGILSARWAGEHGNDAANIDLLLAQIEDIPDDDRTARFRCAAALVVPIAAEEDVADFEADPSDGMDDGDGLVDARETVVLGEMPGTIVRHPHGSNGFGYDPIFMPDEQPAGAEESGELLTSAEMTPEQKNAISHRGKALRALMPAIRELVETGE.

7 to 12 (THNEGK) is a substrate binding site. Catalysis depends on Asp74, which acts as the Proton acceptor. A Mg(2+)-binding site is contributed by Asp74. Residues Ser75, 182–185 (FGYD), Lys214, and 219–220 (HR) each bind substrate.

The protein belongs to the HAM1 NTPase family. Homodimer. Requires Mg(2+) as cofactor.

It catalyses the reaction XTP + H2O = XMP + diphosphate + H(+). The catalysed reaction is dITP + H2O = dIMP + diphosphate + H(+). It carries out the reaction ITP + H2O = IMP + diphosphate + H(+). Pyrophosphatase that catalyzes the hydrolysis of nucleoside triphosphates to their monophosphate derivatives, with a high preference for the non-canonical purine nucleotides XTP (xanthosine triphosphate), dITP (deoxyinosine triphosphate) and ITP. Seems to function as a house-cleaning enzyme that removes non-canonical purine nucleotides from the nucleotide pool, thus preventing their incorporation into DNA/RNA and avoiding chromosomal lesions. The protein is dITP/XTP pyrophosphatase of Bifidobacterium animalis subsp. lactis (strain AD011).